We begin with the raw amino-acid sequence, 2103 residues long: Zinc finger SWIM domain-containing protein 8 homolog (2103 aa).

Residues 191–227 form an SWIM-type zinc finger; it reads FNVAVTFDRRRISSCNCTCTSSAYWCSHVVAVCLHRI. Disordered stretches follow at residues 684–860, 1237–1262, 1310–1399, 1735–1772, 1786–1864, and 1888–1916; these read DGNR…GSTA, SSNP…GGSG, SSGS…IPNQ, MQMF…QVVQ, QQVQ…GVGV, and PFMQ…RQPH. Over residues 724-740 the composition is skewed to polar residues; it reads SALTESDSQSSFDAVSH. Low complexity-rich tracts occupy residues 754–789 and 835–857; these read AVGV…STSS and GRVA…VGSG. The span at 1237-1249 shows a compositional bias: polar residues; it reads SSNPPVRTRSNQP. Residues 1320 to 1351 are compositionally biased toward low complexity; the sequence is GMVPTTNAAGTTGTPSSSSTTVSGSQNPNGNP. The span at 1352–1377 shows a compositional bias: gly residues; it reads SGSGGGGNGGGGNGGGGGGGGGGGGS. The span at 1755 to 1764 shows a compositional bias: pro residues; that stretch reads QPPPQQPPNP. 2 stretches are compositionally biased toward low complexity: residues 1786–1813 and 1820–1835; these read QQVQ…SGFQ and AFQA…MQAG. 2 stretches are compositionally biased toward pro residues: residues 1836–1859 and 1894–1908; these read PPGP…PNGP and PPQP…PSQP.

This sequence belongs to the ZSWIM8 family. Component of the SCF-like E3 ubiquitin-protein ligase complex.

It participates in protein modification; protein ubiquitination. Its function is as follows. Substrate recognition component of a SCF-like E3 ubiquitin-protein ligase complex that promotes target-directed microRNA degradation (TDMD), a process that mediates degradation of microRNAs (miRNAs). The SCF-like E3 ubiquitin-protein ligase complex acts by catalyzing ubiquitination and subsequent degradation of AGO1, thereby exposing miRNAs for degradation. This is Zinc finger SWIM domain-containing protein 8 homolog from Drosophila melanogaster (Fruit fly).